A 309-amino-acid chain; its full sequence is tRNA N6-adenosine threonylcarbamoyltransferase (309 aa).

His108 and His112 together coordinate Fe cation. Substrate-binding positions include Leu130–Gly134, Asp163, Gly176, Asp180, and Asn269. Asp293 provides a ligand contact to Fe cation.

Belongs to the KAE1 / TsaD family. Fe(2+) serves as cofactor.

The protein resides in the cytoplasm. It carries out the reaction L-threonylcarbamoyladenylate + adenosine(37) in tRNA = N(6)-L-threonylcarbamoyladenosine(37) in tRNA + AMP + H(+). Required for the formation of a threonylcarbamoyl group on adenosine at position 37 (t(6)A37) in tRNAs that read codons beginning with adenine. Is involved in the transfer of the threonylcarbamoyl moiety of threonylcarbamoyl-AMP (TC-AMP) to the N6 group of A37, together with TsaE and TsaB. TsaD likely plays a direct catalytic role in this reaction. This is tRNA N6-adenosine threonylcarbamoyltransferase from Mycoplasmopsis agalactiae (strain NCTC 10123 / CIP 59.7 / PG2) (Mycoplasma agalactiae).